The chain runs to 83 residues: Small ribosomal subunit protein bS18A (83 aa).

It belongs to the bacterial ribosomal protein bS18 family. As to quaternary structure, part of the 30S ribosomal subunit. Forms a tight heterodimer with protein bS6.

In terms of biological role, binds as a heterodimer with protein bS6 to the central domain of the 16S rRNA, where it helps stabilize the platform of the 30S subunit. This Nocardia farcinica (strain IFM 10152) protein is Small ribosomal subunit protein bS18A.